Consider the following 152-residue polypeptide: Transcriptional regulator MraZ (152 aa).

SpoVT-AbrB domains lie at 5–52 (ATLV…TLPE) and 81–124 (ASEC…DETT).

It belongs to the MraZ family. Forms oligomers.

It is found in the cytoplasm. It localises to the nucleoid. Negatively regulates its own expression and that of the subsequent genes in the proximal part of the division and cell wall (dcw) gene cluster. Acts by binding directly to DNA. May also regulate the expression of genes outside the dcw cluster. This Enterobacter sp. (strain 638) protein is Transcriptional regulator MraZ.